The following is a 223-amino-acid chain: MTQDQLKQAVAQAAVDFILPKLDDKSIVGVGTGSTANCFIDALAKHKGAFDGAVASSEATAARLKGHGIPVYELNTVSDLEFYVDGADESDEHLNLIKGGGAALTREKIVAAVAKTFICIADGSKLVPVLGAFPLPVEVVPMARSHVARQLVKLGGDPVYREGVLTDNGNIIIDVHNMSITNPVELEASINAIVGVVTNGLFAARPADLLLLGTAEGVKTLTR.

Residues 32–35 (TGST), 85–88 (DGAD), and 98–101 (KGGG) contribute to the substrate site. The Proton acceptor role is filled by Glu107. A substrate-binding site is contributed by Lys125.

Belongs to the ribose 5-phosphate isomerase family. Homodimer.

It carries out the reaction aldehydo-D-ribose 5-phosphate = D-ribulose 5-phosphate. It functions in the pathway carbohydrate degradation; pentose phosphate pathway; D-ribose 5-phosphate from D-ribulose 5-phosphate (non-oxidative stage): step 1/1. Functionally, catalyzes the reversible conversion of ribose-5-phosphate to ribulose 5-phosphate. The polypeptide is Ribose-5-phosphate isomerase A (Pseudomonas syringae pv. tomato (strain ATCC BAA-871 / DC3000)).